The following is a 523-amino-acid chain: GMP synthase [glutamine-hydrolyzing] (523 aa).

Residues 18-208 enclose the Glutamine amidotransferase type-1 domain; that stretch reads KILIVDFGGQ…LYNVCGAKGD (191 aa). The active-site Nucleophile is the C95. Residues H182 and E184 contribute to the active site. Positions 209–398 constitute a GMPS ATP-PPase domain; sequence WNMKSFLAEA…LGLPDYLVHR (190 aa). 236–242 contacts ATP; that stretch reads SGGVDSS.

In terms of assembly, homodimer.

The catalysed reaction is XMP + L-glutamine + ATP + H2O = GMP + L-glutamate + AMP + diphosphate + 2 H(+). Its pathway is purine metabolism; GMP biosynthesis; GMP from XMP (L-Gln route): step 1/1. In terms of biological role, catalyzes the synthesis of GMP from XMP. The chain is GMP synthase [glutamine-hydrolyzing] from Treponema denticola (strain ATCC 35405 / DSM 14222 / CIP 103919 / JCM 8153 / KCTC 15104).